The following is a 254-amino-acid chain: Ribonuclease HII (254 aa).

Positions 70 to 254 constitute an RNase H type-2 domain; it reads TCIAGIDEAG…SFAPVKSVIS (185 aa). A divalent metal cation-binding residues include Asp-76, Glu-77, and Asp-168.

This sequence belongs to the RNase HII family. It depends on Mn(2+) as a cofactor. The cofactor is Mg(2+).

Its subcellular location is the cytoplasm. It carries out the reaction Endonucleolytic cleavage to 5'-phosphomonoester.. In terms of biological role, endonuclease that specifically degrades the RNA of RNA-DNA hybrids. In Bacillus pumilus (strain SAFR-032), this protein is Ribonuclease HII.